The sequence spans 522 residues: Glucans biosynthesis protein G (522 aa).

The signal sequence occupies residues 1-33 (MLVNILSKKPRAASVRWLGATVLFTLLTSPAWA).

Belongs to the OpgD/OpgG family.

The protein resides in the periplasm. The protein operates within glycan metabolism; osmoregulated periplasmic glucan (OPG) biosynthesis. Involved in the biosynthesis of osmoregulated periplasmic glucans (OPGs). The sequence is that of Glucans biosynthesis protein G from Serratia proteamaculans (strain 568).